Reading from the N-terminus, the 534-residue chain is Neryl diphosphate diphosphatase, chloroplastic (534 aa).

Mg(2+)-binding residues include Asp-272, Asp-276, Asp-416, and Glu-424. The DDXXD motif motif lies at 272–276 (DDIFD).

It belongs to the terpene synthase family. Mg(2+) serves as cofactor.

The protein resides in the plastid. Its subcellular location is the chloroplast. It catalyses the reaction neryl diphosphate + H2O = nerol + diphosphate. It participates in secondary metabolite biosynthesis; terpenoid biosynthesis. Monoterpene synthase that catalyzes the hydrolysis of neryl diphosphate (NPP) to form nerol and diphosphate. Is specific for NPP and has no hydrolase activity toward geranyl diphosphate (GPP) or farnesyl diphosphate (FPP). The monoterpene nerol may have an insect repellent effect for the plant leaves. The chain is Neryl diphosphate diphosphatase, chloroplastic from Glycine max (Soybean).